The following is a 201-amino-acid chain: Recombination protein RecR (201 aa).

Residues Cys-60 to Cys-75 form a C4-type zinc finger. The 96-residue stretch at His-83–Thr-178 folds into the Toprim domain.

Belongs to the RecR family.

Functionally, may play a role in DNA repair. It seems to be involved in an RecBC-independent recombinational process of DNA repair. It may act with RecF and RecO. This chain is Recombination protein RecR, found in Leptospira interrogans serogroup Icterohaemorrhagiae serovar copenhageni (strain Fiocruz L1-130).